Consider the following 559-residue polypeptide: Tissue-type plasminogen activator (559 aa).

The signal sequence occupies residues 1-17; the sequence is MKGELLCVLLLCGVAFT. Residues 18–29 constitute a propeptide that is removed on maturation; it reads LPDQGIHRRFRR. The propeptide at 30–32 is removed by plasmin; it reads GAR. The Fibronectin type-I domain maps to 36–78; sequence ATCRDEQTQTTYQQHQSWLRPMLRGNRVEYCRCNSGLAQCHSV. Disulfide bonds link Cys38–Cys68, Cys66–Cys75, Cys83–Cys94, Cys88–Cys105, Cys107–Cys116, Cys124–Cys205, Cys145–Cys187, Cys176–Cys200, Cys213–Cys294, Cys234–Cys276, Cys265–Cys289, Cys297–Cys428, Cys340–Cys356, Cys348–Cys417, Cys442–Cys516, Cys474–Cys490, and Cys506–Cys534. Residues 39–49 form an important for binding to annexin A2 region; it reads RDEQTQTTYQQ. An EGF-like domain is found at 79-117; it reads PVRSCSEPRCFNGGTCQQALYFSDFVCQCPDGFVGKRCD. 2 Kringle domains span residues 124–205 and 213–294; these read CFEG…TPAC and CYVG…MSPC. A glycan (N-linked (GlcNAc...) asparagine) is linked at Asn149. One can recognise a Peptidase S1 domain in the interval 309-558; the sequence is IKGGLFTDIT…YLNWIQDNMK (250 aa). Residues His355 and Asp404 each act as charge relay system in the active site. The N-linked (GlcNAc...) asparagine glycan is linked to Asn481. Ser510 (charge relay system) is an active-site residue.

This sequence belongs to the peptidase S1 family. As to quaternary structure, heterodimer of chain A and chain B held by a disulfide bond. Binds to fibrin with high affinity. This interaction leads to an increase in the catalytic efficiency of the enzyme due to an increase in affinity for plasminogen. Similarly, binding to heparin increases the activation of plasminogen. Binds to annexin A2, cytokeratin-8, fibronectin and laminin. Binds to mannose receptor and the low-density lipoprotein receptor-related protein (LRP1); these proteins are involved in TPA clearance. Binds LRP1B; binding is followed by internalization and degradation. Forms heterodimer with SERPINA5. Interacts with SERPINE1. In complex with SERPINE1, interacts with SORL1. The single chain, almost fully active enzyme, can be further processed into a two-chain fully active form by a cleavage after Arg-308 catalyzed by plasmin, tissue kallikrein or factor Xa.

Its subcellular location is the secreted. The protein resides in the extracellular space. It carries out the reaction Specific cleavage of Arg-|-Val bond in plasminogen to form plasmin.. Inhibited by SERPINA5. Inhibited by SERPINE1. Functionally, converts the abundant, but inactive, zymogen plasminogen to plasmin by hydrolyzing a single Arg-Val bond in plasminogen. By controlling plasmin-mediated proteolysis, it plays an important role in tissue remodeling and degradation, in cell migration and many other physiopathological events. During oocyte activation, plays a role in cortical granule reaction in the zona reaction, which contributes to the block to polyspermy. The protein is Tissue-type plasminogen activator (Plat) of Rattus norvegicus (Rat).